Consider the following 110-residue polypeptide: uncharacterized protein (110 aa).

Residues 18 to 34 (MFPLISTFTSIGLGVLM) traverse the membrane as a helical segment.

The protein resides in the membrane. This is an uncharacterized protein from Saccharomyces cerevisiae (strain ATCC 204508 / S288c) (Baker's yeast).